Reading from the N-terminus, the 320-residue chain is Replication-associated protein ORF2 (320 aa).

Residues Tyr188 and Tyr192 each act as O-(5'-phospho-DNA)-tyrosine intermediate in the active site.

This sequence belongs to the microviridae Rep protein family.

It catalyses the reaction ATP + (deoxyribonucleotide)n-3'-hydroxyl + 5'-phospho-(deoxyribonucleotide)m = (deoxyribonucleotide)n+m + AMP + diphosphate.. Functionally, plays an essential role in viral DNA replication. Binds the origin of replication and cleaves the dsDNA replicative form I (RFI) and becomes covalently bound to it via phosphotyrosine bond, generating the dsDNA replicative form II (RFII). In turn, viral DNA replication initiates at the 3'-OH of the cleavage site. After one round of rolling circle synthesis, protein ORF2 is linked to the newly synthesized ssDNA and joins the ends of the displaced strand to generate a circular single-stranded molecule ready to be packed into a virion. This Spiroplasma virus 4 (SpV4) protein is Replication-associated protein ORF2.